We begin with the raw amino-acid sequence, 194 residues long: Imidazoleglycerol-phosphate dehydratase (194 aa).

It belongs to the imidazoleglycerol-phosphate dehydratase family.

It localises to the cytoplasm. It carries out the reaction D-erythro-1-(imidazol-4-yl)glycerol 3-phosphate = 3-(imidazol-4-yl)-2-oxopropyl phosphate + H2O. It participates in amino-acid biosynthesis; L-histidine biosynthesis; L-histidine from 5-phospho-alpha-D-ribose 1-diphosphate: step 6/9. The sequence is that of Imidazoleglycerol-phosphate dehydratase from Bacillus licheniformis (strain ATCC 14580 / DSM 13 / JCM 2505 / CCUG 7422 / NBRC 12200 / NCIMB 9375 / NCTC 10341 / NRRL NRS-1264 / Gibson 46).